The following is a 355-amino-acid chain: Uroporphyrinogen decarboxylase (355 aa).

Substrate-binding positions include 27–31, D77, Y154, T209, and H328; that span reads RQAGR.

This sequence belongs to the uroporphyrinogen decarboxylase family. In terms of assembly, homodimer.

It localises to the cytoplasm. The enzyme catalyses uroporphyrinogen III + 4 H(+) = coproporphyrinogen III + 4 CO2. It functions in the pathway porphyrin-containing compound metabolism; protoporphyrin-IX biosynthesis; coproporphyrinogen-III from 5-aminolevulinate: step 4/4. Functionally, catalyzes the decarboxylation of four acetate groups of uroporphyrinogen-III to yield coproporphyrinogen-III. The sequence is that of Uroporphyrinogen decarboxylase from Colwellia psychrerythraea (strain 34H / ATCC BAA-681) (Vibrio psychroerythus).